A 179-amino-acid chain; its full sequence is MAHGEVLEFEEYVRTRQDALLRSARRLVPDPVDAQDLLQTALVRTYGRWDGIADKRLADAYLRRVMINTRTEWWRARKLEEVPTEQLPDASVDDSTEQHADRALLMDILKVLAPKQRSVVVLRHWEQMSTEETAAALGMSAGTVKSTLHRALARLREELESRDLDARALEREERERCAA.

Residues 36-49 (DLLQTALVRTYGRW) carry the Polymerase core binding motif. A DNA-binding region (H-T-H motif) is located at residues 130-149 (TEETAAALGMSAGTVKSTLH).

Belongs to the sigma-70 factor family. ECF subfamily.

Its subcellular location is the cytoplasm. Sigma factors are initiation factors that promote the attachment of RNA polymerase to specific initiation sites and are then released. This sigma factor is required for normal cell wall integrity; it is recruited by RNA polymerase to transcribe genes with cell wall-related functions. This chain is RNA polymerase sigma-E factor (sigE), found in Streptomyces avermitilis (strain ATCC 31267 / DSM 46492 / JCM 5070 / NBRC 14893 / NCIMB 12804 / NRRL 8165 / MA-4680).